The primary structure comprises 421 residues: UDP-N-acetylglucosamine 1-carboxyvinyltransferase (421 aa).

22-23 is a binding site for phosphoenolpyruvate; sequence KN. Arg-92 lines the UDP-N-acetyl-alpha-D-glucosamine pocket. Cys-116 functions as the Proton donor in the catalytic mechanism. Cys-116 bears the 2-(S-cysteinyl)pyruvic acid O-phosphothioketal mark. Residues 121–125, Asp-308, and Ile-330 each bind UDP-N-acetyl-alpha-D-glucosamine; that span reads RPVDQ.

The protein belongs to the EPSP synthase family. MurA subfamily.

It is found in the cytoplasm. The catalysed reaction is phosphoenolpyruvate + UDP-N-acetyl-alpha-D-glucosamine = UDP-N-acetyl-3-O-(1-carboxyvinyl)-alpha-D-glucosamine + phosphate. The protein operates within cell wall biogenesis; peptidoglycan biosynthesis. Its function is as follows. Cell wall formation. Adds enolpyruvyl to UDP-N-acetylglucosamine. The chain is UDP-N-acetylglucosamine 1-carboxyvinyltransferase from Ralstonia nicotianae (strain ATCC BAA-1114 / GMI1000) (Ralstonia solanacearum).